Reading from the N-terminus, the 439-residue chain is uncharacterized protein (439 aa).

The DAGKc domain occupies 65–208 (TRPKRVFVLV…VYAFELTTEG (144 aa)).

This is an uncharacterized protein from Caenorhabditis elegans.